Consider the following 314-residue polypeptide: MLRIYAPASSANISVGFDTLGAAISPIDGSLLGDVVQIESISSGFELESAGYFVRKLPKEPQKNIVYQAYVLFSEQLKLRGANVKPLRLTLEKNMPIGSGLGSSACSIVAALVALNQFHNEPFSKMELLEMMGELEGRISGSIHYDNVAPCYLGGVQFMVQSLGNICQKLPFFDNWYWVLAYPGIEVSTAEARAILPKSYTRQNVIAHGRHLGGFVHACHTHQENLAAIMMKDVIAEPYRESLLPNFAEVKQATRDLGALATGISGSGPTIFSIAPDLQTAIKLSSYLESHYLQNNEGFVHVCKVDNEGTREIK.

Pro-96 to Cys-106 is an ATP binding site.

Belongs to the GHMP kinase family. Homoserine kinase subfamily.

The protein resides in the cytoplasm. It catalyses the reaction L-homoserine + ATP = O-phospho-L-homoserine + ADP + H(+). The protein operates within amino-acid biosynthesis; L-threonine biosynthesis; L-threonine from L-aspartate: step 4/5. Its function is as follows. Catalyzes the ATP-dependent phosphorylation of L-homoserine to L-homoserine phosphate. This chain is Homoserine kinase, found in Haemophilus influenzae (strain 86-028NP).